The primary structure comprises 275 residues: tRNA-splicing endonuclease subunit SEN34 (275 aa).

Active-site residues include Tyr209, His217, and Lys250.

This sequence belongs to the tRNA-intron endonuclease family. As to quaternary structure, heterotetramer composed of SEN2, SEN15, SEN34 and SEN54. Interacts directly with SEN15.

It is found in the nucleus. The protein resides in the endomembrane system. It localises to the mitochondrion outer membrane. It catalyses the reaction pretRNA = a 3'-half-tRNA molecule with a 5'-OH end + a 5'-half-tRNA molecule with a 2',3'-cyclic phosphate end + an intron with a 2',3'-cyclic phosphate and a 5'-hydroxyl terminus.. In terms of biological role, constitutes one of the two catalytic subunit of the tRNA-splicing endonuclease complex, a complex responsible for identification and cleavage of the splice sites in pre-tRNA. It cleaves pre-tRNA at the 5'- and 3'-splice sites to release the intron. The products are an intron and two tRNA half-molecules bearing 2',3'-cyclic phosphate and 5'-OH termini. There are no conserved sequences at the splice sites, but the intron is invariably located at the same site in the gene, placing the splice sites an invariant distance from the constant structural features of the tRNA body. It probably carries the active site for 3'-splice site cleavage. The polypeptide is tRNA-splicing endonuclease subunit SEN34 (SEN34) (Saccharomyces cerevisiae (strain ATCC 204508 / S288c) (Baker's yeast)).